Here is a 283-residue protein sequence, read N- to C-terminus: Elongation factor Ts (283 aa).

The involved in Mg(2+) ion dislocation from EF-Tu stretch occupies residues 84–87 (TDFV).

Belongs to the EF-Ts family.

The protein localises to the cytoplasm. Its function is as follows. Associates with the EF-Tu.GDP complex and induces the exchange of GDP to GTP. It remains bound to the aminoacyl-tRNA.EF-Tu.GTP complex up to the GTP hydrolysis stage on the ribosome. This chain is Elongation factor Ts, found in Bifidobacterium longum (strain DJO10A).